The chain runs to 310 residues: Protein N-terminal asparagine amidohydrolase (310 aa).

Monomer.

It is found in the cytoplasm. The enzyme catalyses N-terminal L-asparaginyl-[protein] + H2O + H(+) = N-terminal L-aspartyl-[protein] + NH4(+). Its activity is regulated as follows. Inhibited by micromolar concentrations of copper and zinc ions. Functionally, N-terminal asparagine deamidase that mediates deamidation of N-terminal asparagine residues to aspartate. Required for the ubiquitin-dependent turnover of intracellular proteins that initiate with Met-Asn. These proteins are acetylated on the retained initiator methionine and can subsequently be modified by the removal of N-acetyl methionine by acylaminoacid hydrolase (AAH). Conversion of the resulting N-terminal asparagine to aspartate by NTAN1/PNAD renders the protein susceptible to arginylation, polyubiquitination and degradation as specified by the N-end rule. This enzyme does not act on substrates with internal or C-terminal asparagines and does not act on glutamine residues in any position, nor on acetylated N-terminal peptidyl Asn. This Homo sapiens (Human) protein is Protein N-terminal asparagine amidohydrolase (NTAN1).